The primary structure comprises 415 residues: Multidrug resistance protein MdtA (415 aa).

A signal peptide spans 1–21 (MKGSYKSRWVIVIVVVIAAIA). 2 disordered regions span residues 32 to 56 (SRSA…GMRA) and 392 to 415 (EAQS…GARS). A compositionally biased stretch (basic and acidic residues) spans 399–415 (SEEKATSREYAKKGARS).

It belongs to the membrane fusion protein (MFP) (TC 8.A.1) family. Part of a tripartite efflux system composed of MdtA, MdtB and MdtC.

Its subcellular location is the cell inner membrane. Its function is as follows. The MdtABC tripartite complex confers resistance against novobiocin and deoxycholate. In Escherichia coli O7:K1 (strain IAI39 / ExPEC), this protein is Multidrug resistance protein MdtA.